A 58-amino-acid polypeptide reads, in one-letter code: Large ribosomal subunit protein uL30 (58 aa).

It belongs to the universal ribosomal protein uL30 family. As to quaternary structure, part of the 50S ribosomal subunit.

The protein is Large ribosomal subunit protein uL30 of Parabacteroides distasonis (strain ATCC 8503 / DSM 20701 / CIP 104284 / JCM 5825 / NCTC 11152).